Reading from the N-terminus, the 326-residue chain is Transcription factor MYB16 (326 aa).

HTH myb-type domains are found at residues 9–61 and 62–116; these read KLGL…TNYL and RPDI…KKRL. 2 consecutive DNA-binding regions (H-T-H motif) follow at residues 37 to 61 and 89 to 112; these read WRSLPEKAGLHRCGKSCRLRWTNYL and WSAIATHLPKRTDNEIKNYWNTHL. 2 disordered regions span residues 197–217 and 280–299; these read NWTTKPHEDQQQLESPTSTVS and DRSFSGDKNETAGESSGGDC. Residues 208–217 show a composition bias toward polar residues; that stretch reads QLESPTSTVS. A compositionally biased stretch (basic and acidic residues) spans 280–290; that stretch reads DRSFSGDKNET.

Expressed in trichomes, epidermis and mesophyll cells of young leaves, stems, petals, sepals, carpels and stamens.

It is found in the nucleus. Its function is as follows. Involved in the control of epidermal cell morphogenesis in petals. Promotes unidirectional cell expansion once outgrowth has been initiated. Coordinately with WIN1/SHN1, participates in the regulation of cuticle biosynthesis and wax accumulation in reproductive organs and trichomes. Functions in cuticle nanoridge formation in petals and stamens, and in morphogenesis of petal conical cells and trichomes. Functions as a major regulator of cuticle formation in vegetative organs by regulating the cuticle biosynthesis genes CYP86A8/LCR and CER1. The polypeptide is Transcription factor MYB16 (Arabidopsis thaliana (Mouse-ear cress)).